Here is a 309-residue protein sequence, read N- to C-terminus: Pyrroline-5-carboxylate reductase 1, mitochondrial (309 aa).

N-acetylserine is present on Ser-2. NADP(+)-binding positions include 6 to 11 and Ser-34; that span reads IGAGQL. Residues Ala-8, Gln-10, Leu-11, Ser-34, Asp-36, Asn-56, Val-70, Lys-71, and Ala-97 each coordinate NADPH. NADP(+) is bound by residues Asn-56, 69 to 72, and 95 to 97; these read AVKP and CAA. Glu-164 is an L-proline binding site. Asn-230 contacts NADPH. Positions 237 and 238 each coordinate L-proline. Phosphoserine occurs at positions 278 and 301.

It belongs to the pyrroline-5-carboxylate reductase family. Homodecamer; composed of 5 homodimers. Interacts with LTO1. In terms of tissue distribution, highly expressed in osteoblasts and skin.

The protein resides in the mitochondrion. The catalysed reaction is L-proline + NADP(+) = (S)-1-pyrroline-5-carboxylate + NADPH + 2 H(+). It carries out the reaction L-proline + NAD(+) = (S)-1-pyrroline-5-carboxylate + NADH + 2 H(+). It functions in the pathway amino-acid biosynthesis; L-proline biosynthesis; L-proline from L-glutamate 5-semialdehyde: step 1/1. Oxidoreductase that catalyzes the last step in proline biosynthesis, which corresponds to the reduction of pyrroline-5-carboxylate to L-proline using NAD(P)H. At physiologic concentrations, has higher specific activity in the presence of NADH. Involved in the cellular response to oxidative stress. The protein is Pyrroline-5-carboxylate reductase 1, mitochondrial of Mus musculus (Mouse).